A 102-amino-acid polypeptide reads, in one-letter code: Mini zinc finger protein 1 (102 aa).

Positions 1 to 13 (MMKKRQMVIKQRS) are enriched in basic residues. A disordered region spans residues 1–34 (MMKKRQMVIKQRSRNSNTSSSWTTTSSSSSSSEI). Over residues 14 to 32 (RNSNTSSSWTTTSSSSSSS) the composition is skewed to low complexity. A ZF-HD dimerization-type; degenerate zinc finger spans residues 39-88 (YVECQKNHAANIGGYAVDGCREFMAAGVEGTVDALRCAACGCHRNFHRKE).

In terms of assembly, homo- and heterodimers. Interacts with ZHD1, ZHD5, ZHD6, ZHD7, ZHD8, ZHD10 and ZHD13. Mostly expressed in roots and stems, present in siliques and seedlings, and weakly observed in petioles, leaves and flowers.

It is found in the cytoplasm. Functionally, inhibits zinc finger homeodomain (ZHD) transcription factors, such as ZHD5, by interacting with them to prevent both their nuclear localization and their DNA-binding properties. Involved in integrating signals from multiple hormones by preventing the expression of genes involved in gibberellic acid (GA), auxin and brassinosteroid signaling and by promoting the expression of abscisic acid (ABA)-responsive genes. Regulates several development aspects, including photomorphogenesis, apical dominance, longevity, flower morphology and fertility, as well as root and stem elongation. Promotes the formation of ectopic shoot meristems on leaf margins. In Arabidopsis thaliana (Mouse-ear cress), this protein is Mini zinc finger protein 1 (MIF1).